A 243-amino-acid chain; its full sequence is 3-deoxy-manno-octulosonate cytidylyltransferase (243 aa).

It belongs to the KdsB family.

It is found in the cytoplasm. It carries out the reaction 3-deoxy-alpha-D-manno-oct-2-ulosonate + CTP = CMP-3-deoxy-beta-D-manno-octulosonate + diphosphate. Its pathway is nucleotide-sugar biosynthesis; CMP-3-deoxy-D-manno-octulosonate biosynthesis; CMP-3-deoxy-D-manno-octulosonate from 3-deoxy-D-manno-octulosonate and CTP: step 1/1. The protein operates within bacterial outer membrane biogenesis; lipopolysaccharide biosynthesis. In terms of biological role, activates KDO (a required 8-carbon sugar) for incorporation into bacterial lipopolysaccharide in Gram-negative bacteria. The protein is 3-deoxy-manno-octulosonate cytidylyltransferase of Helicobacter pylori (strain ATCC 700392 / 26695) (Campylobacter pylori).